Consider the following 577-residue polypeptide: DNA primase (577 aa).

The segment at 40 to 64 adopts a CHC2-type zinc-finger fold; that stretch reads CPFHHDKTPSFTVSNEKQFYYCFGC. The region spanning 255 to 337 is the Toprim domain; it reads VYLLVVEGYI…KKTLKFILLP (83 aa). Residues Glu261, Asp305, and Asp307 each coordinate Mg(2+).

The protein belongs to the DnaG primase family. As to quaternary structure, monomer. Interacts with DnaB. The cofactor is Zn(2+). Requires Mg(2+) as cofactor.

The catalysed reaction is ssDNA + n NTP = ssDNA/pppN(pN)n-1 hybrid + (n-1) diphosphate.. Its function is as follows. RNA polymerase that catalyzes the synthesis of short RNA molecules used as primers for DNA polymerase during DNA replication. The polypeptide is DNA primase (Buchnera aphidicola subsp. Acyrthosiphon pisum (strain APS) (Acyrthosiphon pisum symbiotic bacterium)).